A 693-amino-acid chain; its full sequence is Elongation factor G (693 aa).

One can recognise a tr-type G domain in the interval 8 to 283; the sequence is NRIRNIGIAA…AVIDYLPAPT (276 aa). Residues 17–24, 81–85, and 135–138 each bind GTP; these read AHIDAGKT, DTPGH, and NKMD.

It belongs to the TRAFAC class translation factor GTPase superfamily. Classic translation factor GTPase family. EF-G/EF-2 subfamily.

It is found in the cytoplasm. Catalyzes the GTP-dependent ribosomal translocation step during translation elongation. During this step, the ribosome changes from the pre-translocational (PRE) to the post-translocational (POST) state as the newly formed A-site-bound peptidyl-tRNA and P-site-bound deacylated tRNA move to the P and E sites, respectively. Catalyzes the coordinated movement of the two tRNA molecules, the mRNA and conformational changes in the ribosome. The sequence is that of Elongation factor G from Wolinella succinogenes (strain ATCC 29543 / DSM 1740 / CCUG 13145 / JCM 31913 / LMG 7466 / NCTC 11488 / FDC 602W) (Vibrio succinogenes).